A 440-amino-acid polypeptide reads, in one-letter code: RUN domain-containing protein 3A (440 aa).

The RUN domain maps to 52 to 184 (DDSSEEFVNF…IDFSFCLKGE (133 aa)). The segment at 213-233 (DDRESVGGSSSEDSSPEHPYL) is disordered. Residues 262 to 317 (YLEELVRLRETQLKNLEAENKRLTQRISEQAEQSLQEKHQLEGVILELQEQLTGLL) adopt a coiled-coil conformation. The segment at 374 to 402 (LSSESQRLDGKQDGEPWGPIGKDPTPSML) is disordered.

This sequence belongs to the RUNDC3 family.

This chain is RUN domain-containing protein 3A (rundc3a), found in Xenopus tropicalis (Western clawed frog).